Consider the following 63-residue polypeptide: Large ribosomal subunit protein bL28 (63 aa).

Belongs to the bacterial ribosomal protein bL28 family.

The polypeptide is Large ribosomal subunit protein bL28 (Kosmotoga olearia (strain ATCC BAA-1733 / DSM 21960 / TBF 19.5.1)).